We begin with the raw amino-acid sequence, 121 residues long: Small ribosomal subunit protein uS13 (121 aa).

Residues 91 to 121 (HRRGLPVRGQNTKNNARTRKGPSKTVAGKKK) form a disordered region. Residues 106-121 (ARTRKGPSKTVAGKKK) show a composition bias toward basic residues.

This sequence belongs to the universal ribosomal protein uS13 family. Part of the 30S ribosomal subunit. Forms a loose heterodimer with protein S19. Forms two bridges to the 50S subunit in the 70S ribosome.

Its function is as follows. Located at the top of the head of the 30S subunit, it contacts several helices of the 16S rRNA. In the 70S ribosome it contacts the 23S rRNA (bridge B1a) and protein L5 of the 50S subunit (bridge B1b), connecting the 2 subunits; these bridges are implicated in subunit movement. Contacts the tRNAs in the A and P-sites. The polypeptide is Small ribosomal subunit protein uS13 (Listeria monocytogenes serotype 4b (strain CLIP80459)).